A 293-amino-acid chain; its full sequence is ATP synthase gamma chain (293 aa).

It belongs to the ATPase gamma chain family. As to quaternary structure, F-type ATPases have 2 components, CF(1) - the catalytic core - and CF(0) - the membrane proton channel. CF(1) has five subunits: alpha(3), beta(3), gamma(1), delta(1), epsilon(1). CF(0) has three main subunits: a, b and c.

It localises to the cell inner membrane. Its function is as follows. Produces ATP from ADP in the presence of a proton gradient across the membrane. The gamma chain is believed to be important in regulating ATPase activity and the flow of protons through the CF(0) complex. In Psychrobacter sp. (strain PRwf-1), this protein is ATP synthase gamma chain.